The following is a 521-amino-acid chain: UPF0053 protein BU323 (521 aa).

7 helical membrane-spanning segments follow: residues 13–33 (LLTLVILEVVLGIDNLIFVAI), 49–69 (IGLGLALVMRLALLSLISWIV), 80–100 (FFSLSIRDIILLFGGFFLLFK), 125–145 (FWAVVIQIVVLDAVFSLDAII), 150–170 (MVNQLLIMMIAVILATFLMLL), 185–205 (VVVLCLSFLLMIGFSLVTEAL), and 207–227 (FCIPKGYLYAAIGFSILIEIF). 2 CBS domains span residues 311–370 (MTPR…KIDA) and 374–434 (SSKI…DADE).

Belongs to the UPF0053 family.

The protein localises to the cell membrane. This Buchnera aphidicola subsp. Acyrthosiphon pisum (strain APS) (Acyrthosiphon pisum symbiotic bacterium) protein is UPF0053 protein BU323.